The primary structure comprises 139 residues: Small ribosomal subunit protein uS9 (139 aa).

This sequence belongs to the universal ribosomal protein uS9 family.

The protein is Small ribosomal subunit protein uS9 of Coxiella burnetii (strain CbuG_Q212) (Coxiella burnetii (strain Q212)).